We begin with the raw amino-acid sequence, 102 residues long: Large ribosomal subunit protein bL21 (102 aa).

It belongs to the bacterial ribosomal protein bL21 family. Part of the 50S ribosomal subunit. Contacts protein L20.

This protein binds to 23S rRNA in the presence of protein L20. This Listeria monocytogenes serotype 4b (strain CLIP80459) protein is Large ribosomal subunit protein bL21.